A 184-amino-acid chain; its full sequence is Protein PPLZ12 (184 aa).

This chain is Protein PPLZ12 (PPLZ12), found in Lupinus polyphyllus (Large-leaved lupine).